The chain runs to 69 residues: MAKIKGQVKWFNESKGFGFITPADGSKDVFVHFSAIQGNGFKTLAEGQNVEFEIQDGQKGPAAVNVTAI.

The CSD domain maps to 6 to 66 (GQVKWFNESK…GQKGPAAVNV (61 aa)).

Its subcellular location is the cytoplasm. In Escherichia coli O157:H7, this protein is Cold shock-like protein CspC (cspC).